The sequence spans 488 residues: 3-octaprenyl-4-hydroxybenzoate carboxy-lyase (488 aa).

Residue N172 participates in Mn(2+) binding. Residues I175 to R177, R189 to L191, and R194 to G195 each bind prenylated FMN. E238 serves as a coordination point for Mn(2+). D287 functions as the Proton donor in the catalytic mechanism.

It belongs to the UbiD family. As to quaternary structure, homohexamer. Prenylated FMN is required as a cofactor. Requires Mn(2+) as cofactor.

It localises to the cell membrane. The enzyme catalyses a 4-hydroxy-3-(all-trans-polyprenyl)benzoate + H(+) = a 2-(all-trans-polyprenyl)phenol + CO2. It participates in cofactor biosynthesis; ubiquinone biosynthesis. In terms of biological role, catalyzes the decarboxylation of 3-octaprenyl-4-hydroxy benzoate to 2-octaprenylphenol, an intermediate step in ubiquinone biosynthesis. The protein is 3-octaprenyl-4-hydroxybenzoate carboxy-lyase of Pseudomonas aeruginosa (strain LESB58).